The sequence spans 160 residues: Putative 4-hydroxy-4-methyl-2-oxoglutarate aldolase (160 aa).

Residues 75 to 78 (GDQL) and arginine 97 contribute to the substrate site. Aspartate 98 lines the a divalent metal cation pocket.

Belongs to the class II aldolase/RraA-like family. As to quaternary structure, homotrimer. Requires a divalent metal cation as cofactor.

It carries out the reaction 4-hydroxy-4-methyl-2-oxoglutarate = 2 pyruvate. The catalysed reaction is oxaloacetate + H(+) = pyruvate + CO2. In terms of biological role, catalyzes the aldol cleavage of 4-hydroxy-4-methyl-2-oxoglutarate (HMG) into 2 molecules of pyruvate. Also contains a secondary oxaloacetate (OAA) decarboxylase activity due to the common pyruvate enolate transition state formed following C-C bond cleavage in the retro-aldol and decarboxylation reactions. This Vibrio parahaemolyticus serotype O3:K6 (strain RIMD 2210633) protein is Putative 4-hydroxy-4-methyl-2-oxoglutarate aldolase.